Reading from the N-terminus, the 63-residue chain is Small ribosomal subunit protein bS21 (63 aa).

Basic and acidic residues predominate over residues Lys-40–Ala-52. Residues Lys-40–Tyr-63 are disordered. Residues Arg-53–Tyr-63 are compositionally biased toward basic residues.

The protein belongs to the bacterial ribosomal protein bS21 family.

The protein is Small ribosomal subunit protein bS21 of Limosilactobacillus reuteri (strain DSM 20016) (Lactobacillus reuteri).